Reading from the N-terminus, the 681-residue chain is Glycogen-binding subunit 76A (681 aa).

Disordered regions lie at residues 1–20, 53–94, 232–251, 285–391, and 405–435; these read MNDPGDIPLTHTSTPDSRPP, LGSQ…DLQP, SLTEVEQTKPEEGKLTNGHL, FADR…ASNL, and QDATEAVEKSGAPSRGTTVDTTDDEDDCRPQ. A compositionally biased stretch (acidic residues) spans 59–69; it reads EEGEGNAEDEP. Residues 72-91 show a composition bias toward polar residues; sequence NGTSTNTWVNSHDSEQTVTD. Composition is skewed to basic and acidic residues over residues 237 to 251, 297 to 308, and 321 to 336; these read EQTKPEEGKLTNGHL, RVQKESSQERVP, and PSDRVQTDASDERVQE. Positions 353–364 are enriched in polar residues; that stretch reads TESISTEVTTLE. Over residues 365–374 the composition is skewed to basic and acidic residues; that stretch reads RSPEESRNDE. Residues 525–632 form the CBM21 domain; sequence AVREKQVSLE…NNYGANYCFQ (108 aa). Phosphothreonine is present on threonine 545. Phosphoserine occurs at positions 547 and 549.

This Drosophila melanogaster (Fruit fly) protein is Glycogen-binding subunit 76A (Gbs-76A).